Reading from the N-terminus, the 96-residue chain is Protein YddL (96 aa).

Positions 1 to 21 (MKLKIVAVVVTGLLAANVAHA) are cleaved as a signal peptide.

This Escherichia coli (strain K12) protein is Protein YddL (yddL).